A 137-amino-acid chain; its full sequence is Nucleoside diphosphate kinase (137 aa).

The ATP site is built by Lys-9, Phe-57, Arg-85, Thr-91, Arg-102, and Asn-112. His-115 serves as the catalytic Pros-phosphohistidine intermediate.

The protein belongs to the NDK family. As to quaternary structure, homotetramer. It depends on Mg(2+) as a cofactor.

The protein localises to the cytoplasm. It catalyses the reaction a 2'-deoxyribonucleoside 5'-diphosphate + ATP = a 2'-deoxyribonucleoside 5'-triphosphate + ADP. It carries out the reaction a ribonucleoside 5'-diphosphate + ATP = a ribonucleoside 5'-triphosphate + ADP. In terms of biological role, major role in the synthesis of nucleoside triphosphates other than ATP. The ATP gamma phosphate is transferred to the NDP beta phosphate via a ping-pong mechanism, using a phosphorylated active-site intermediate. The protein is Nucleoside diphosphate kinase of Thermus thermophilus (strain ATCC BAA-163 / DSM 7039 / HB27).